We begin with the raw amino-acid sequence, 547 residues long: Glucose-6-phosphate isomerase (547 aa).

The Proton donor role is filled by glutamate 354. Residues histidine 385 and lysine 513 contribute to the active site.

It belongs to the GPI family.

Its subcellular location is the cytoplasm. The catalysed reaction is alpha-D-glucose 6-phosphate = beta-D-fructose 6-phosphate. It participates in carbohydrate biosynthesis; gluconeogenesis. The protein operates within carbohydrate degradation; glycolysis; D-glyceraldehyde 3-phosphate and glycerone phosphate from D-glucose: step 2/4. In terms of biological role, catalyzes the reversible isomerization of glucose-6-phosphate to fructose-6-phosphate. This Endomicrobium trichonymphae protein is Glucose-6-phosphate isomerase.